Reading from the N-terminus, the 371-residue chain is Queuine tRNA-ribosyltransferase (371 aa).

D90 acts as the Proton acceptor in catalysis. Substrate-binding positions include 90–94 (DSGGF), D144, Q189, and G215. Positions 246 to 252 (GVGTPEN) are RNA binding. The active-site Nucleophile is the D265. Residues 270-274 (TRNAR) form an RNA binding; important for wobble base 34 recognition region. 4 residues coordinate Zn(2+): C303, C305, C308, and H334.

This sequence belongs to the queuine tRNA-ribosyltransferase family. Homodimer. Within each dimer, one monomer is responsible for RNA recognition and catalysis, while the other monomer binds to the replacement base PreQ1. The cofactor is Zn(2+).

It carries out the reaction 7-aminomethyl-7-carbaguanine + guanosine(34) in tRNA = 7-aminomethyl-7-carbaguanosine(34) in tRNA + guanine. It functions in the pathway tRNA modification; tRNA-queuosine biosynthesis. In terms of biological role, catalyzes the base-exchange of a guanine (G) residue with the queuine precursor 7-aminomethyl-7-deazaguanine (PreQ1) at position 34 (anticodon wobble position) in tRNAs with GU(N) anticodons (tRNA-Asp, -Asn, -His and -Tyr). Catalysis occurs through a double-displacement mechanism. The nucleophile active site attacks the C1' of nucleotide 34 to detach the guanine base from the RNA, forming a covalent enzyme-RNA intermediate. The proton acceptor active site deprotonates the incoming PreQ1, allowing a nucleophilic attack on the C1' of the ribose to form the product. After dissociation, two additional enzymatic reactions on the tRNA convert PreQ1 to queuine (Q), resulting in the hypermodified nucleoside queuosine (7-(((4,5-cis-dihydroxy-2-cyclopenten-1-yl)amino)methyl)-7-deazaguanosine). In Helicobacter pylori (strain P12), this protein is Queuine tRNA-ribosyltransferase.